A 323-amino-acid chain; its full sequence is Acetyl-coenzyme A carboxylase carboxyl transferase subunit alpha (323 aa).

Residues 32–293 form the CoA carboxyltransferase C-terminal domain; the sequence is NISEEVAKLQ…RKALAAQLES (262 aa).

This sequence belongs to the AccA family. Acetyl-CoA carboxylase is a heterohexamer composed of biotin carboxyl carrier protein (AccB), biotin carboxylase (AccC) and two subunits each of ACCase subunit alpha (AccA) and ACCase subunit beta (AccD).

Its subcellular location is the cytoplasm. The catalysed reaction is N(6)-carboxybiotinyl-L-lysyl-[protein] + acetyl-CoA = N(6)-biotinyl-L-lysyl-[protein] + malonyl-CoA. It functions in the pathway lipid metabolism; malonyl-CoA biosynthesis; malonyl-CoA from acetyl-CoA: step 1/1. In terms of biological role, component of the acetyl coenzyme A carboxylase (ACC) complex. First, biotin carboxylase catalyzes the carboxylation of biotin on its carrier protein (BCCP) and then the CO(2) group is transferred by the carboxyltransferase to acetyl-CoA to form malonyl-CoA. In Alcanivorax borkumensis (strain ATCC 700651 / DSM 11573 / NCIMB 13689 / SK2), this protein is Acetyl-coenzyme A carboxylase carboxyl transferase subunit alpha.